A 168-amino-acid chain; its full sequence is Cyanate hydratase (168 aa).

Catalysis depends on residues Arg94, Glu97, and Ser120.

The protein belongs to the cyanase family.

The enzyme catalyses cyanate + hydrogencarbonate + 3 H(+) = NH4(+) + 2 CO2. Its function is as follows. Catalyzes the reaction of cyanate with bicarbonate to produce ammonia and carbon dioxide. This is Cyanate hydratase from Oryza sativa subsp. indica (Rice).